Reading from the N-terminus, the 221-residue chain is Flavin-dependent thymidylate synthase (221 aa).

Positions 9–209 (GFVKLLDHMG…PWTYESFIRY (201 aa)) constitute a ThyX domain. FAD-binding positions include S55, 78 to 80 (RHR), and E86. Residues 75–78 (QWMR), 86–90 (ELSGR), and R148 contribute to the dUMP site. Residues 78–88 (RHRIASYNELS) carry the ThyX motif motif. FAD-binding positions include 164 to 166 (NAR) and N170. R175 provides a ligand contact to dUMP. R175 serves as the catalytic Involved in ionization of N3 of dUMP, leading to its activation.

Belongs to the thymidylate synthase ThyX family. As to quaternary structure, homotetramer. Requires FAD as cofactor.

It carries out the reaction dUMP + (6R)-5,10-methylene-5,6,7,8-tetrahydrofolate + NADPH + H(+) = dTMP + (6S)-5,6,7,8-tetrahydrofolate + NADP(+). Its pathway is pyrimidine metabolism; dTTP biosynthesis. Functionally, catalyzes the reductive methylation of 2'-deoxyuridine-5'-monophosphate (dUMP) to 2'-deoxythymidine-5'-monophosphate (dTMP) while utilizing 5,10-methylenetetrahydrofolate (mTHF) as the methyl donor, and NADPH and FADH(2) as the reductant. The chain is Flavin-dependent thymidylate synthase from Pseudothermotoga lettingae (strain ATCC BAA-301 / DSM 14385 / NBRC 107922 / TMO) (Thermotoga lettingae).